We begin with the raw amino-acid sequence, 3418 residues long: Breast cancer type 2 susceptibility protein (3418 aa).

The interval 1–40 (MPIGSKERPTFFEIFKTRCNKADLGPISLNWFEELSSEAP) is interaction with PALB2. The segment at 37-68 (SEAPPYNSEPAEESEHKNNNYEPNLFKTPQRK) is disordered. A Phosphoserine modification is found at Ser-70. The interval 358–381 (VEPNDTDPLDSNVANQKPFESGSD) is disordered. Phosphoserine occurs at positions 445, 492, and 755. The segment at 639–1000 (LHSSVKRSCS…NKWAGLLGPI (362 aa)) is interaction with NPM1. BRCA2 repeat units lie at residues 1002 to 1036 (NHSF…DIEE), 1212 to 1246 (NEVG…DIEN), 1421 to 1455 (FETS…QKPE), 1517 to 1551 (KEPT…EKEQ), 1664 to 1698 (IENS…EGIF), and 1837 to 1871 (FEVG…DSFS). The interval 1003–2082 (HSFGGSFRTA…LHKVKGVLEE (1080 aa)) is interaction with RAD51. The interval 1338 to 1781 (GSDSSKNDTV…IEPVLKNVED (444 aa)) is interaction with POLH. The segment at 1410–1595 (TATKTEQNIK…TAAPKCKEMQ (186 aa)) is required for stimulation of POLH DNA polymerization activity. Ser-1970 is subject to Phosphoserine. One copy of the BRCA2 7 repeat lies at 1971 to 2005 (SANTCGIFSTASGKSVQVSDASLQNARQVFSEIED). At Thr-2035 the chain carries Phosphothreonine. The BRCA2 8 repeat unit spans residues 2051–2085 (NSSAFSGFSTASGKQVSILESSLHKVKGVLEEFDL). Ser-2095 is subject to Phosphoserine. An interaction with HSF2BP region spans residues 2270–2337 (GKRRGEPLIL…EPITCVPFRT (68 aa)). Residues 2350–2545 (TAPGQEFLSK…SHKQLYTYGV (196 aa)) are interaction with FANCD2. The segment at 2430-2450 (ENRQKQNIDGHGSDDSKNKIN) is disordered. The interaction with SEM1 stretch occupies residues 2481-2832 (ITSLQNARDI…QRAYPIQWME (352 aa)). The Nuclear export signal; masked by interaction with SEM1 signature appears at 2682-2698 (AAKTLVLCVSDIISLSA). The residue at position 3291 (Ser-3291) is a Phosphoserine; by CDK1 and CDK2. Ser-3319 carries the phosphoserine modification. A Phosphothreonine; by CHEK1 and CHEK2 modification is found at Thr-3387. The disordered stretch occupies residues 3393–3418 (EQESSQASTEECEKNKQDTITTKKYI).

In terms of assembly, monomer and dimer. Interacts with RAD51; regulates RAD51 recruitment and function at sites of DNA repair. Interacts with WDR16, USP11, DMC1, ROCK2 and NPM1. Interacts with SEM1; the interaction masks a nuclear export signal in BRCA2. Interacts with both nonubiquitinated and monoubiquitinated FANCD2; this complex also includes XRCC3 and phosphorylated FANCG. Part of a BRCA complex containing BRCA1, BRCA2 and PALB2. Component of the homologous recombination repair (HR) complex composed of ERCC5/XPG, BRCA2, PALB2, DSS1 and RAD51. Within the complex, interacts with ERCC5/XPG and PALB2. Interacts directly with PALB2 which may serve as a scaffold for a HR complex containing PALB2, BRCA2, RAD51C, RAD51 and XRCC3. Interacts with BRCA1 only in the presence of PALB2 which serves as the bridging protein. Interacts with POLH; the interaction is direct. Interacts with the TREX-2 complex subunits PCID2 and SEM1. Interacts with HSF2BP and BRME1; the interaction with HSF2BP is direct and allows the formation of a ternary complex. The complex BRME1:HSF2BP:BRCA2 interacts with SPATA22, MEIOB and RAD51. Post-translationally, phosphorylated by ATM upon irradiation-induced DNA damage. Phosphorylation by CHEK1 and CHEK2 regulates interaction with RAD51. Phosphorylation at Ser-3291 by CDK1 and CDK2 is low in S phase when recombination is active, but increases as cells progress towards mitosis; this phosphorylation prevents homologous recombination-dependent repair during S phase and G2 by inhibiting RAD51 binding. Ubiquitinated in the absence of DNA damage; this does not lead to proteasomal degradation. In contrast, ubiquitination in response to DNA damage leads to proteasomal degradation. As to expression, highest levels of expression in breast and thymus, with slightly lower levels in lung, ovary and spleen.

It localises to the nucleus. The protein localises to the cytoplasm. Its subcellular location is the cytoskeleton. The protein resides in the microtubule organizing center. It is found in the centrosome. Involved in double-strand break repair and/or homologous recombination. Binds RAD51 and potentiates recombinational DNA repair by promoting assembly of RAD51 onto single-stranded DNA (ssDNA). Acts by targeting RAD51 to ssDNA over double-stranded DNA, enabling RAD51 to displace replication protein-A (RPA) from ssDNA and stabilizing RAD51-ssDNA filaments by blocking ATP hydrolysis. Part of a PALB2-scaffolded HR complex containing RAD51C and which is thought to play a role in DNA repair by HR. May participate in S phase checkpoint activation. Binds selectively to ssDNA, and to ssDNA in tailed duplexes and replication fork structures. May play a role in the extension step after strand invasion at replication-dependent DNA double-strand breaks; together with PALB2 is involved in both POLH localization at collapsed replication forks and DNA polymerization activity. In concert with NPM1, regulates centrosome duplication. Interacts with the TREX-2 complex (transcription and export complex 2) subunits PCID2 and SEM1, and is required to prevent R-loop-associated DNA damage and thus transcription-associated genomic instability. Silencing of BRCA2 promotes R-loop accumulation at actively transcribed genes in replicating and non-replicating cells, suggesting that BRCA2 mediates the control of R-loop associated genomic instability, independently of its known role in homologous recombination. The protein is Breast cancer type 2 susceptibility protein of Homo sapiens (Human).